A 605-amino-acid polypeptide reads, in one-letter code: MGLPNTDSCRIRNFCIIAHIDHGKSTLADRLLEITRTLDRTQMGSAQVLDDMDLERERGITIKSHAIQMRYNAADGLEYTLNLIDTPGHVDFSYEVSRSLAACEGALLIVDATQGVEAQTIANLYLALDAGLDIIPVINKIDLPSSDVEGVARQIIDLMGVKRDEILAVSAKAGIGISELMESIVHRIPPPAVKNNEPLRALIFDSVFDAYRGAVVYLRIVEGLLKRGDKVRFFASDKLFTADEIGIMTMTRQPREQLASGNVGYLICSIKDVKDAKVGDTVTLADNPAVERLSGYKEVKPMVFSGLYPINSNEFEDLRESLEKLALNDASLIYTPETSVALGFGFRCGFLGLLHMEIIQERLEREYGVNIITTVPNVEYRVFLTNGEEVEVDNPSVMPEAGRIKQVEEPYVSMQIITLADYIGNIMKLGMERRGEYKTTDYLDTTRVIMHFEFPLAEVVFDFHDKLKSISKGYASMDYEYIGYRDSDLVKLDVMLNGDTVDALSIIVHRSKAYEWGKKLCQKLKGIIPKQMYEVAIQAAIGSRIISRETISAMRKNVLAKCYGGDISRKRKLLEKQKEGKKRMKQVGRVEVPQEAFLALLNIDE.

Positions 9–192 (CRIRNFCIIA…SIVHRIPPPA (184 aa)) constitute a tr-type G domain. Residues 21–26 (DHGKST) and 139–142 (NKID) each bind GTP.

The protein belongs to the TRAFAC class translation factor GTPase superfamily. Classic translation factor GTPase family. LepA subfamily.

The protein resides in the cell inner membrane. It carries out the reaction GTP + H2O = GDP + phosphate + H(+). Functionally, required for accurate and efficient protein synthesis under certain stress conditions. May act as a fidelity factor of the translation reaction, by catalyzing a one-codon backward translocation of tRNAs on improperly translocated ribosomes. Back-translocation proceeds from a post-translocation (POST) complex to a pre-translocation (PRE) complex, thus giving elongation factor G a second chance to translocate the tRNAs correctly. Binds to ribosomes in a GTP-dependent manner. This Chlorobium chlorochromatii (strain CaD3) protein is Elongation factor 4.